The chain runs to 141 residues: Cytochrome c-type biogenesis protein CcmE (141 aa).

At 1–7 (MRARTRR) the chain is on the cytoplasmic side. A helical; Signal-anchor for type II membrane protein transmembrane segment spans residues 8–28 (LYTFGIAAALIVAAAALAFFA). Topologically, residues 29-141 (LRENANLFYT…RELKPLEAGG (113 aa)) are periplasmic. Positions 125 and 129 each coordinate heme.

This sequence belongs to the CcmE/CycJ family.

It localises to the cell inner membrane. Functionally, heme chaperone required for the biogenesis of c-type cytochromes. Transiently binds heme delivered by CcmC and transfers the heme to apo-cytochromes in a process facilitated by CcmF and CcmH. This chain is Cytochrome c-type biogenesis protein CcmE, found in Hyphomonas neptunium (strain ATCC 15444).